The sequence spans 365 residues: tRNA(Met) cytidine acetate ligase (365 aa).

ATP is bound by residues 7-20 (IAEF…HKYL), Gly-96, Asn-152, and Arg-175.

Belongs to the TmcAL family.

Its subcellular location is the cytoplasm. The enzyme catalyses cytidine(34) in elongator tRNA(Met) + acetate + ATP = N(4)-acetylcytidine(34) in elongator tRNA(Met) + AMP + diphosphate. In terms of biological role, catalyzes the formation of N(4)-acetylcytidine (ac(4)C) at the wobble position of elongator tRNA(Met), using acetate and ATP as substrates. First activates an acetate ion to form acetyladenylate (Ac-AMP) and then transfers the acetyl group to tRNA to form ac(4)C34. The chain is tRNA(Met) cytidine acetate ligase from Streptococcus pneumoniae serotype 4 (strain ATCC BAA-334 / TIGR4).